A 211-amino-acid chain; its full sequence is Histidine biosynthesis bifunctional protein HisIE (211 aa).

Positions 1-117 are phosphoribosyl-AMP cyclohydrolase; the sequence is MSTQTNTKSD…CWLDGNAHPF (117 aa). Residues 118–211 are phosphoribosyl-ATP pyrophosphohydrolase; the sequence is LNNLAELIAS…LARHQKAQRK (94 aa).

This sequence in the N-terminal section; belongs to the PRA-CH family. The protein in the C-terminal section; belongs to the PRA-PH family.

The protein localises to the cytoplasm. The catalysed reaction is 1-(5-phospho-beta-D-ribosyl)-ATP + H2O = 1-(5-phospho-beta-D-ribosyl)-5'-AMP + diphosphate + H(+). It catalyses the reaction 1-(5-phospho-beta-D-ribosyl)-5'-AMP + H2O = 1-(5-phospho-beta-D-ribosyl)-5-[(5-phospho-beta-D-ribosylamino)methylideneamino]imidazole-4-carboxamide. It participates in amino-acid biosynthesis; L-histidine biosynthesis; L-histidine from 5-phospho-alpha-D-ribose 1-diphosphate: step 2/9. The protein operates within amino-acid biosynthesis; L-histidine biosynthesis; L-histidine from 5-phospho-alpha-D-ribose 1-diphosphate: step 3/9. In Shewanella oneidensis (strain ATCC 700550 / JCM 31522 / CIP 106686 / LMG 19005 / NCIMB 14063 / MR-1), this protein is Histidine biosynthesis bifunctional protein HisIE.